The following is a 636-amino-acid chain: Signal recognition particle receptor subunit alpha (636 aa).

Disordered stretches follow at residues 132–205 (APTT…ELSK), 217–246 (IQKH…APRV), and 280–314 (IRGT…TKGT). Basic and acidic residues-rich tracts occupy residues 137 to 146 (KKFEDSEKAK) and 153 to 165 (IETR…EKAK). Ser177 bears the Phosphoserine mark. Over residues 217–238 (IQKHGKGLDKSSKSTKSDTPKE) the composition is skewed to basic and acidic residues. Thr283 is subject to Phosphothreonine. Phosphoserine occurs at positions 295, 296, and 297. Residues 302–312 (ATQNTKPSATK) show a composition bias toward polar residues. Thr303 carries the post-translational modification Phosphothreonine. Residues 417–634 (YVVTFCGVNG…NAKAVVAALM (218 aa)) form an NG domain region. GTP-binding positions include 423–430 (GVNGVGKS) and 518–522 (DTAGR). Thr576 bears the Phosphothreonine mark. GTP is bound at residue 586–589 (TKFD).

Belongs to the GTP-binding SRP family. In terms of assembly, heterodimer with SRPRB. Interacts with the signal recognition particle (SRP) complex subunit SRP54.

Its subcellular location is the endoplasmic reticulum membrane. Component of the SRP (signal recognition particle) receptor. Ensures, in conjunction with the signal recognition particle, the correct targeting of the nascent secretory proteins to the endoplasmic reticulum membrane system. Forms a guanosine 5'-triphosphate (GTP)-dependent complex with the SRP subunit SRP54. SRP receptor compaction and GTPase rearrangement drive SRP-mediated cotranslational protein translocation into the ER. This chain is Signal recognition particle receptor subunit alpha, found in Mus musculus (Mouse).